The primary structure comprises 429 residues: Gamma-glutamyl phosphate reductase (429 aa).

Belongs to the gamma-glutamyl phosphate reductase family.

It is found in the cytoplasm. The enzyme catalyses L-glutamate 5-semialdehyde + phosphate + NADP(+) = L-glutamyl 5-phosphate + NADPH + H(+). It functions in the pathway amino-acid biosynthesis; L-proline biosynthesis; L-glutamate 5-semialdehyde from L-glutamate: step 2/2. In terms of biological role, catalyzes the NADPH-dependent reduction of L-glutamate 5-phosphate into L-glutamate 5-semialdehyde and phosphate. The product spontaneously undergoes cyclization to form 1-pyrroline-5-carboxylate. This Bradyrhizobium sp. (strain ORS 278) protein is Gamma-glutamyl phosphate reductase.